The following is a 369-amino-acid chain: Tetraacyldisaccharide 4'-kinase (369 aa).

68 to 75 lines the ATP pocket; that stretch reads VVGGTGKT.

Belongs to the LpxK family.

It carries out the reaction a lipid A disaccharide + ATP = a lipid IVA + ADP + H(+). It participates in glycolipid biosynthesis; lipid IV(A) biosynthesis; lipid IV(A) from (3R)-3-hydroxytetradecanoyl-[acyl-carrier-protein] and UDP-N-acetyl-alpha-D-glucosamine: step 6/6. Transfers the gamma-phosphate of ATP to the 4'-position of a tetraacyldisaccharide 1-phosphate intermediate (termed DS-1-P) to form tetraacyldisaccharide 1,4'-bis-phosphate (lipid IVA). The polypeptide is Tetraacyldisaccharide 4'-kinase (Chlamydia trachomatis serovar D (strain ATCC VR-885 / DSM 19411 / UW-3/Cx)).